A 688-amino-acid polypeptide reads, in one-letter code: Glycine--tRNA ligase beta subunit (688 aa).

Belongs to the class-II aminoacyl-tRNA synthetase family. Tetramer of two alpha and two beta subunits.

It is found in the cytoplasm. It catalyses the reaction tRNA(Gly) + glycine + ATP = glycyl-tRNA(Gly) + AMP + diphosphate. The polypeptide is Glycine--tRNA ligase beta subunit (Histophilus somni (strain 129Pt) (Haemophilus somnus)).